The following is a 513-amino-acid chain: ATP synthase subunit alpha (513 aa).

169-176 contacts ATP; the sequence is GDRQTGKT.

It belongs to the ATPase alpha/beta chains family. F-type ATPases have 2 components, CF(1) - the catalytic core - and CF(0) - the membrane proton channel. CF(1) has five subunits: alpha(3), beta(3), gamma(1), delta(1), epsilon(1). CF(0) has three main subunits: a(1), b(2) and c(9-12). The alpha and beta chains form an alternating ring which encloses part of the gamma chain. CF(1) is attached to CF(0) by a central stalk formed by the gamma and epsilon chains, while a peripheral stalk is formed by the delta and b chains.

It is found in the cell inner membrane. The catalysed reaction is ATP + H2O + 4 H(+)(in) = ADP + phosphate + 5 H(+)(out). Its function is as follows. Produces ATP from ADP in the presence of a proton gradient across the membrane. The alpha chain is a regulatory subunit. This chain is ATP synthase subunit alpha, found in Ralstonia pickettii (strain 12J).